A 129-amino-acid chain; its full sequence is M-zodatoxin-Lt8a (129 aa).

A signal peptide spans 1–20; sequence MKYFVVALALVAAFACIAES. Positions 21–60 are excised as a propeptide; it reads KPAESEHELAEVEEENELADLEDAVWLEHLADLSDLEEAR. The short motif at 57–60 is the Processing quadruplet motif element; it reads EEAR.

It belongs to the cationic peptide 06 (cytoinsectotoxin) family. Cleavage of the propeptide depends on the processing quadruplet motif (XXXR, with at least one of X being E). In terms of tissue distribution, expressed by the venom gland.

The protein resides in the secreted. Its function is as follows. Insecticidal, cytolytic and antimicrobial peptide. Has insecticidal activity against the flesh fly S.carnaria, and against the cockroach N.cinerea. Has insecticidal activity against D.melanogaster. Has hemolytic activity against human erythrocytes (EC(50)=6 uM). Has cytolytic activity against insect Sf9 cells (EC(50)=1 uM) and human leukocytes (EC(50)=3 uM). Has antibacterial activity against the Gram-positive bacteria A.globiformis VKM Ac-1112 (MIC=0.5 uM), and B.subtilis VKM B-501 (MIC=0.6-0.9 uM), and against the Gram-negative bacteria E.coli C600 (MIC=0.5 uM), E.coli DH5alpha (MIC=0.9 uM), E.coli MH1 (MIC=0.5 uM), P.aeruginosa PAO1 (MIC=1.9 uM), and P.fluorescens VKM B-894 (MIC=3.8 uM). Lacks antimicrobial activity against the Gram-positive bacteria M.luteus and S.aureus, and against the Gram-negative bacterium S.marcescens. Forms voltage-dependent, ion-permeable channels in membranes. At high concentration causes cell membrane lysis. The sequence is that of M-zodatoxin-Lt8a (cit 1-1) from Lachesana tarabaevi (Spider).